The primary structure comprises 71 residues: Large ribosomal subunit protein bL31 (71 aa).

Cysteine 16, cysteine 18, cysteine 36, and cysteine 39 together coordinate Zn(2+).

This sequence belongs to the bacterial ribosomal protein bL31 family. Type A subfamily. As to quaternary structure, part of the 50S ribosomal subunit. Zn(2+) is required as a cofactor.

Functionally, binds the 23S rRNA. The protein is Large ribosomal subunit protein bL31 of Thermus thermophilus (strain ATCC BAA-163 / DSM 7039 / HB27).